The primary structure comprises 87 residues: UPF0250 protein KPN78578_06520 (87 aa).

This sequence belongs to the UPF0250 family.

This chain is UPF0250 protein KPN78578_06520, found in Klebsiella pneumoniae subsp. pneumoniae (strain ATCC 700721 / MGH 78578).